The primary structure comprises 319 residues: Cobalamin biosynthesis protein CobD (319 aa).

4 helical membrane passes run 55–75 (AVMW…VLAL), 78–98 (EIHP…VLAG), 153–173 (VDGI…LAMA), and 296–316 (LMWV…CLLV).

It belongs to the CobD/CbiB family.

The protein resides in the cell membrane. It participates in cofactor biosynthesis; adenosylcobalamin biosynthesis. Functionally, converts cobyric acid to cobinamide by the addition of aminopropanol on the F carboxylic group. This is Cobalamin biosynthesis protein CobD from Citrobacter koseri (strain ATCC BAA-895 / CDC 4225-83 / SGSC4696).